Here is a 166-residue protein sequence, read N- to C-terminus: NAD(P)H-quinone oxidoreductase subunit I, chloroplastic (166 aa).

4Fe-4S ferredoxin-type domains are found at residues Gly55 to Lys84 and Leu95 to Glu124. [4Fe-4S] cluster contacts are provided by Cys64, Cys67, Cys70, Cys74, Cys104, Cys107, Cys110, and Cys114.

It belongs to the complex I 23 kDa subunit family. NDH is composed of at least 16 different subunits, 5 of which are encoded in the nucleus. It depends on [4Fe-4S] cluster as a cofactor.

It is found in the plastid. It localises to the chloroplast thylakoid membrane. It catalyses the reaction a plastoquinone + NADH + (n+1) H(+)(in) = a plastoquinol + NAD(+) + n H(+)(out). It carries out the reaction a plastoquinone + NADPH + (n+1) H(+)(in) = a plastoquinol + NADP(+) + n H(+)(out). NDH shuttles electrons from NAD(P)H:plastoquinone, via FMN and iron-sulfur (Fe-S) centers, to quinones in the photosynthetic chain and possibly in a chloroplast respiratory chain. The immediate electron acceptor for the enzyme in this species is believed to be plastoquinone. Couples the redox reaction to proton translocation, and thus conserves the redox energy in a proton gradient. The sequence is that of NAD(P)H-quinone oxidoreductase subunit I, chloroplastic from Raillardella argentea (Silky raillardella).